Reading from the N-terminus, the 466-residue chain is Arginine biosynthesis bifunctional protein ArgJ, mitochondrial (466 aa).

Substrate-binding residues include Thr-194, Lys-223, Thr-234, Glu-321, Asn-461, and Thr-466. Thr-234 acts as the Nucleophile in catalysis.

The protein belongs to the ArgJ family. As to quaternary structure, heterodimer of an alpha and a beta chain. Post-translationally, the alpha and beta chains are autoproteolytically processed from a single precursor protein within the mitochondrion.

Its subcellular location is the mitochondrion matrix. It carries out the reaction N(2)-acetyl-L-ornithine + L-glutamate = N-acetyl-L-glutamate + L-ornithine. The enzyme catalyses L-glutamate + acetyl-CoA = N-acetyl-L-glutamate + CoA + H(+). It functions in the pathway amino-acid biosynthesis; L-arginine biosynthesis; L-ornithine and N-acetyl-L-glutamate from L-glutamate and N(2)-acetyl-L-ornithine (cyclic): step 1/1. The protein operates within amino-acid biosynthesis; L-arginine biosynthesis; N(2)-acetyl-L-ornithine from L-glutamate: step 1/4. Its function is as follows. Catalyzes two activities which are involved in the cyclic version of arginine biosynthesis: the synthesis of acetylglutamate from glutamate and acetyl-CoA, and of ornithine by transacetylation between acetylornithine and glutamate. This Aspergillus flavus (strain ATCC 200026 / FGSC A1120 / IAM 13836 / NRRL 3357 / JCM 12722 / SRRC 167) protein is Arginine biosynthesis bifunctional protein ArgJ, mitochondrial.